The primary structure comprises 129 residues: MKLFTGLIFCSLVLGVSSQWYSFIGEAAQGAWDMYRAYSDMIEAKYKNSDKYFHARGNYDAAQRGPGGAWAAKVISDARERSQRITDLIKYGDSGHGVEDSKADQAANEWGRSGKDPNHFRPPGLPDKY.

Positions 1-18 (MKLFTGLIFCSLVLGVSS) are cleaved as a signal peptide. Residues 19 to 44 (QWYSFIGEAAQGAWDMYRAYSDMIEA) are important for amyloid formation. Residues 92-129 (GDSGHGVEDSKADQAANEWGRSGKDPNHFRPPGLPDKY) are disordered.

This sequence belongs to the SAA family. In terms of assembly, homohexamer; dimer of trimers. Can form amyloid fibrils after partial proteolysis; the native, undenatured protein does not form amyloid fibrils (in vitro). Apolipoprotein of the HDL complex. Binds to heparin. As to expression, detected in liver.

Its subcellular location is the secreted. Major acute phase protein. The polypeptide is Serum amyloid A-1 protein (SAA1) (Neovison vison (American mink)).